The chain runs to 361 residues: Mannose-1-phosphate guanyltransferase (361 aa).

This sequence belongs to the transferase hexapeptide repeat family.

It localises to the cytoplasm. The catalysed reaction is alpha-D-mannose 1-phosphate + GTP + H(+) = GDP-alpha-D-mannose + diphosphate. Its pathway is nucleotide-sugar biosynthesis; GDP-alpha-D-mannose biosynthesis; GDP-alpha-D-mannose from alpha-D-mannose 1-phosphate (GTP route): step 1/1. In terms of biological role, involved in cell wall synthesis where it is required for glycosylation. Involved in cell cycle progression through cell-size checkpoint. The polypeptide is Mannose-1-phosphate guanyltransferase (MPG1) (Kluyveromyces lactis (strain ATCC 8585 / CBS 2359 / DSM 70799 / NBRC 1267 / NRRL Y-1140 / WM37) (Yeast)).